Consider the following 108-residue polypeptide: U-scoloptoxin(10)-Sm1a (108 aa).

The first 24 residues, 1–24, serve as a signal peptide directing secretion; that stretch reads MNKQWLHFFSVLLLCYVIEETCSL.

The protein belongs to the scoloptoxin-10 family. Post-translationally, contains 3 disulfide bonds. As to expression, expressed by the venom gland.

Its subcellular location is the secreted. This is U-scoloptoxin(10)-Sm1a from Scolopendra morsitans (Tanzanian blue ringleg centipede).